We begin with the raw amino-acid sequence, 206 residues long: ATP phosphoribosyltransferase (206 aa).

Belongs to the ATP phosphoribosyltransferase family. Short subfamily. In terms of assembly, heteromultimer composed of HisG and HisZ subunits.

Its subcellular location is the cytoplasm. The catalysed reaction is 1-(5-phospho-beta-D-ribosyl)-ATP + diphosphate = 5-phospho-alpha-D-ribose 1-diphosphate + ATP. It functions in the pathway amino-acid biosynthesis; L-histidine biosynthesis; L-histidine from 5-phospho-alpha-D-ribose 1-diphosphate: step 1/9. Catalyzes the condensation of ATP and 5-phosphoribose 1-diphosphate to form N'-(5'-phosphoribosyl)-ATP (PR-ATP). Has a crucial role in the pathway because the rate of histidine biosynthesis seems to be controlled primarily by regulation of HisG enzymatic activity. This is ATP phosphoribosyltransferase from Campylobacter curvus (strain 525.92).